Reading from the N-terminus, the 118-residue chain is Phosphoribosyl-AMP cyclohydrolase (118 aa).

Aspartate 87 contributes to the Mg(2+) binding site. Cysteine 88 is a binding site for Zn(2+). Positions 89 and 91 each coordinate Mg(2+). The Zn(2+) site is built by cysteine 104 and cysteine 111.

The protein belongs to the PRA-CH family. In terms of assembly, homodimer. It depends on Mg(2+) as a cofactor. Requires Zn(2+) as cofactor.

It is found in the cytoplasm. The catalysed reaction is 1-(5-phospho-beta-D-ribosyl)-5'-AMP + H2O = 1-(5-phospho-beta-D-ribosyl)-5-[(5-phospho-beta-D-ribosylamino)methylideneamino]imidazole-4-carboxamide. It functions in the pathway amino-acid biosynthesis; L-histidine biosynthesis; L-histidine from 5-phospho-alpha-D-ribose 1-diphosphate: step 3/9. Functionally, catalyzes the hydrolysis of the adenine ring of phosphoribosyl-AMP. The chain is Phosphoribosyl-AMP cyclohydrolase from Corynebacterium glutamicum (strain ATCC 13032 / DSM 20300 / JCM 1318 / BCRC 11384 / CCUG 27702 / LMG 3730 / NBRC 12168 / NCIMB 10025 / NRRL B-2784 / 534).